We begin with the raw amino-acid sequence, 834 residues long: DNA-directed RNA polymerase subunit beta' (834 aa).

A compositionally biased stretch (polar residues) spans 1–22; that stretch reads MTYSNKPTGSSLRSSRNSTLEP. The disordered stretch occupies residues 1–45; that stretch reads MTYSNKPTGSSLRSSRNSTLEPQSLVHREESKRQEGPKGQNLRIG. Basic and acidic residues predominate over residues 26–36; sequence VHREESKRQEG. Residues Cys-101, Cys-103, Cys-118, and Cys-121 each contribute to the Zn(2+) site. Positions 606, 608, and 610 each coordinate Mg(2+).

This sequence belongs to the RNA polymerase beta' chain family. RpoC1 subfamily. As to quaternary structure, in plastids the minimal PEP RNA polymerase catalytic core is composed of four subunits: alpha, beta, beta', and beta''. When a (nuclear-encoded) sigma factor is associated with the core the holoenzyme is formed, which can initiate transcription. The cofactor is Mg(2+). Zn(2+) serves as cofactor.

It localises to the plastid. Its subcellular location is the chloroplast. The enzyme catalyses RNA(n) + a ribonucleoside 5'-triphosphate = RNA(n+1) + diphosphate. Its function is as follows. DNA-dependent RNA polymerase catalyzes the transcription of DNA into RNA using the four ribonucleoside triphosphates as substrates. The protein is DNA-directed RNA polymerase subunit beta' of Staurastrum punctulatum (Green alga).